The following is a 423-amino-acid chain: Deferrochelatase (423 aa).

The tat-type signal signal peptide spans 1-35; it reads MQYKDENGVNEPSRRRLLKVIGALALAGSCPVAHA. 236-238 serves as a coordination point for heme b; the sequence is GTA. Protoporphyrin IX contacts are provided by residues 236-238 and arginine 296; that span reads GTA. Residues histidine 329, 334–336, and arginine 347 contribute to the heme b site; that span reads NPR.

In terms of assembly, homodimer. Part of a ferrous iron transporter composed of EfeU, EfeO and EfeB. However, this EfeUOB tripartite iron transporter is defective in E.coli strain K12 due to a frameshift mutation in EfeU. The cofactor is heme b. Post-translationally, exported by the Tat system. The position of the signal peptide cleavage has been experimentally proven. Can also be exported by the Sec system.

Its subcellular location is the periplasm. It carries out the reaction heme b + 2 H(+) = protoporphyrin IX + Fe(2+). Involved in the recovery of exogenous heme iron. Extracts iron from heme while preserving the protoporphyrin ring intact. Also displays peroxidase activity on guaiacol in vitro. The protein is Deferrochelatase (efeB) of Escherichia coli (strain K12).